The chain runs to 160 residues: MSFNHFDDQGRAIMVDVSGKQPTLRTATAAATVSMQPDTLADLLAGRTTKGDVLGVARIAGIAAAKKTPELIPLSHPLAIHHAAIDFDTDQACGTVTVRATVRAFERTGVEMEAMTSAAVAALTIYDMCKGADKGITIGQIRLLFKEGGKSGTWQREEGQ.

Substrate-binding positions include 74–76 (LSH) and 112–113 (ME). Residue aspartate 127 is part of the active site.

The protein belongs to the MoaC family. Homohexamer; trimer of dimers.

The catalysed reaction is (8S)-3',8-cyclo-7,8-dihydroguanosine 5'-triphosphate = cyclic pyranopterin phosphate + diphosphate. It participates in cofactor biosynthesis; molybdopterin biosynthesis. In terms of biological role, catalyzes the conversion of (8S)-3',8-cyclo-7,8-dihydroguanosine 5'-triphosphate to cyclic pyranopterin monophosphate (cPMP). The chain is Cyclic pyranopterin monophosphate synthase from Geobacter sulfurreducens (strain ATCC 51573 / DSM 12127 / PCA).